A 1108-amino-acid polypeptide reads, in one-letter code: MRSEGAAPGPAAPLCGALSLLLGALLGKVIEGHGVTDNIQRFSSLPPYLPVSYHILRAETSFFLKEANQDLLRNSSLQARVESFFTYKTRQPPVLNASYGPFSVEKVVPLDLMLTSNFLGPTNKFSFDWKLKAHILRDKVYLSRPKVQVLFHIMGRDWDDHGAGEKLPCLRVFAFRETREVRGSCRLKGDLGLCVAELELLSSWFSAPTVGAGRKKSMDQPEGTPVELYYTVHPGNERGDCAGGDFRKGNAIRPGKDGLEETTSHLQRIGTVGLYRAQDSAQLSELRLDGNVVIWLPSRPVKQGEVVTAYVTISSNSSVDLFILRAKVKKGVNILSAQTREPRQWGVKQEVGSGGKHVTATVACQRLGPSPRNRSSSLFNEVVQMNFEIASFSSLSGTQPITWQVEYPRKGTTDIAVSEIFVSQKDLVGIVPLAMDTEILNTAVLTGKTVAMPIKVVSVEENSAVMDISESVECKSTDEDVIKVSERCDYIFVNGKEIKGKMDAVVNFTYQYLSAPLCVTVWVPRLPLQIEVSDTELSQIKGWRVPIVTNKRPTRESEDEDEEERRGRGCALQYQHATVRVLTQFVSEGAGPWGQPNYLLSPNWQFDITHLVADFMKLEEPHVATLQDSRVLVGREVGMTTIQVLSPLSDSILAEKTITVLDDKVSVTDLAIQLVAGLSVALYPNAENSKAVTAVVTAEEVLRTPKQEAVFSTWLQFSDGSVTPLDIYDTKDFSLAATSQDEAVVSVPQPRSPRWPVVVAEGEGQGPLIRVDMTIAEACQKSKRKSILAVGVGNVRVKFGQNDADSSPGGDYEEDEIKNHASDRRQKGQHHERTGQDGHLYGSSPVEREEGALRRATTTARSLLDNKVVKNSRADGGRLAGEGQLQNIPIDFTNFPAHVDLPKAGSGLEENDLVQTPRGLSDLEIGMYALLGVFCLAILVFLINCATFALKYRHKQVPLEGQASMTHSHDWVWLGNEAELLESMGDAPPPQDEHTTIIDRGPGACEESNHLLLNGGSHKHVQSQIHRSADSGGRQGREQKQDPLHSPTSKRKKVKFTTFTTIPPDDSCPTVNSIVSSNDEDIKWVCQDVAVGAPKELRNYLEKLKDKA.

Residues 1 to 27 (MRSEGAAPGPAAPLCGALSLLLGALLG) form the signal peptide. Topologically, residues 28–922 (KVIEGHGVTD…LVQTPRGLSD (895 aa)) are extracellular. 2 N-linked (GlcNAc...) asparagine glycosylation sites follow: Asn-316 and Asn-373. Residues 820–836 (HASDRRQKGQHHERTGQ) show a composition bias toward basic and acidic residues. Positions 820–857 (HASDRRQKGQHHERTGQDGHLYGSSPVEREEGALRRAT) are disordered. The helical transmembrane segment at 923-943 (LEIGMYALLGVFCLAILVFLI) threads the bilayer. Residues 944-1108 (NCATFALKYR…NYLEKLKDKA (165 aa)) lie on the Cytoplasmic side of the membrane. The disordered stretch occupies residues 1022 to 1072 (QSQIHRSADSGGRQGREQKQDPLHSPTSKRKKVKFTTFTTIPPDDSCPTVN).

The protein belongs to the TMEM132 family.

It localises to the membrane. In Homo sapiens (Human), this protein is Transmembrane protein 132C (TMEM132C).